Here is a 572-residue protein sequence, read N- to C-terminus: Proline--tRNA ligase (572 aa).

The protein belongs to the class-II aminoacyl-tRNA synthetase family. ProS type 1 subfamily. As to quaternary structure, homodimer. May form a tertiary complex with YbaK and t-RNA(Pro).

The protein localises to the cytoplasm. It catalyses the reaction tRNA(Pro) + L-proline + ATP = L-prolyl-tRNA(Pro) + AMP + diphosphate. Functionally, catalyzes the attachment of proline to tRNA(Pro) in a two-step reaction: proline is first activated by ATP to form Pro-AMP and then transferred to the acceptor end of tRNA(Pro). As ProRS can inadvertently accommodate and process non-cognate amino acids such as alanine and cysteine, to avoid such errors it has two additional distinct editing activities against alanine. One activity is designated as 'pretransfer' editing and involves the tRNA(Pro)-independent hydrolysis of activated Ala-AMP. The other activity is designated 'posttransfer' editing and involves deacylation of mischarged Ala-tRNA(Pro). The misacylated Cys-tRNA(Pro) is not edited by ProRS, but is probably edited in trans by YbaK. In Haemophilus influenzae (strain ATCC 51907 / DSM 11121 / KW20 / Rd), this protein is Proline--tRNA ligase.